The following is a 195-amino-acid chain: MTPMLLSAFWTYTLITALTPGPNNILALSAATAHGFRQSIRVLAGMSLGFLVVMLLCAGIAFSLAVIDPAIIHLLSWVGAAYILWLAWKIATSPAADEKVRPKPVGFWVSFGLQFVNVKIILYGITALSTFVLPQTQALNWVIGVSILLALIGTFGNVCWALAGHLFQRAFRHYGRQLNIILALLLVYCAVRIFY.

The Periplasmic segment spans residues 1–9 (MTPMLLSAF). Residues 10 to 32 (WTYTLITALTPGPNNILALSAAT) traverse the membrane as a helical segment. The Cytoplasmic portion of the chain corresponds to 33–46 (AHGFRQSIRVLAGM). A helical transmembrane segment spans residues 47–67 (SLGFLVVMLLCAGIAFSLAVI). The Periplasmic portion of the chain corresponds to 68 to 69 (DP). The helical transmembrane segment at 70–90 (AIIHLLSWVGAAYILWLAWKI) threads the bilayer. Residues 91–104 (ATSPAADEKVRPKP) are Cytoplasmic-facing. Residues 105–125 (VGFWVSFGLQFVNVKIILYGI) traverse the membrane as a helical segment. The Periplasmic segment spans residues 126–141 (TALSTFVLPQTQALNW). A helical membrane pass occupies residues 142-162 (VIGVSILLALIGTFGNVCWAL). Over 163–176 (AGHLFQRAFRHYGR) the chain is Cytoplasmic. A helical transmembrane segment spans residues 177–194 (QLNIILALLLVYCAVRIF). Tyr195 is a topological domain (periplasmic).

It belongs to the Rht family.

The protein resides in the cell inner membrane. The enzyme catalyses O-acetyl-L-serine(in) = O-acetyl-L-serine(out). It catalyses the reaction L-cysteine(in) = L-cysteine(out). Functionally, exporter of O-acetylserine (OAS) and cysteine. The protein is Cysteine/O-acetylserine efflux protein (eamB) of Salmonella paratyphi A (strain ATCC 9150 / SARB42).